The sequence spans 379 residues: Protein COS4 (379 aa).

4 helical membrane passes run 43–63 (IYKSLAFRIWMLLWLPLSVWW), 70–90 (IYPLMVSLLVLFWGPVFVLVI), 233–253 (ISNIFMLIPFLNFLCCIYVSR), and 255–275 (MCLLLRTLYLGWILFMLVQGF).

Belongs to the DUP/COS family.

It is found in the membrane. This chain is Protein COS4 (COS4), found in Saccharomyces cerevisiae (strain ATCC 204508 / S288c) (Baker's yeast).